Here is a 430-residue protein sequence, read N- to C-terminus: Glutamate-1-semialdehyde 2,1-aminomutase (430 aa).

The residue at position 265 (lysine 265) is an N6-(pyridoxal phosphate)lysine.

It belongs to the class-III pyridoxal-phosphate-dependent aminotransferase family. HemL subfamily. In terms of assembly, homodimer. Pyridoxal 5'-phosphate is required as a cofactor.

The protein localises to the cytoplasm. The catalysed reaction is (S)-4-amino-5-oxopentanoate = 5-aminolevulinate. It functions in the pathway porphyrin-containing compound metabolism; protoporphyrin-IX biosynthesis; 5-aminolevulinate from L-glutamyl-tRNA(Glu): step 2/2. In Helicobacter pylori (strain ATCC 700392 / 26695) (Campylobacter pylori), this protein is Glutamate-1-semialdehyde 2,1-aminomutase (hemL).